A 50-amino-acid chain; its full sequence is ATP synthase protein 8 (50 aa).

A helical membrane pass occupies residues 13 to 32; it reads ITFTFIILAITVYILSKYIL.

Belongs to the ATPase protein 8 family. F-type ATPases have 2 components, CF(1) - the catalytic core - and CF(0) - the membrane proton channel.

It is found in the mitochondrion membrane. Mitochondrial membrane ATP synthase (F(1)F(0) ATP synthase or Complex V) produces ATP from ADP in the presence of a proton gradient across the membrane which is generated by electron transport complexes of the respiratory chain. F-type ATPases consist of two structural domains, F(1) - containing the extramembraneous catalytic core and F(0) - containing the membrane proton channel, linked together by a central stalk and a peripheral stalk. During catalysis, ATP synthesis in the catalytic domain of F(1) is coupled via a rotary mechanism of the central stalk subunits to proton translocation. Part of the complex F(0) domain. Minor subunit located with subunit a in the membrane. In Podospora anserina (strain S / ATCC MYA-4624 / DSM 980 / FGSC 10383) (Pleurage anserina), this protein is ATP synthase protein 8 (ATP8).